The chain runs to 273 residues: Putative pyruvate, phosphate dikinase regulatory protein (273 aa).

149–156 (GPSRTSKT) is an ADP binding site.

It belongs to the pyruvate, phosphate/water dikinase regulatory protein family. PDRP subfamily.

It catalyses the reaction N(tele)-phospho-L-histidyl/L-threonyl-[pyruvate, phosphate dikinase] + ADP = N(tele)-phospho-L-histidyl/O-phospho-L-threonyl-[pyruvate, phosphate dikinase] + AMP + H(+). The catalysed reaction is N(tele)-phospho-L-histidyl/O-phospho-L-threonyl-[pyruvate, phosphate dikinase] + phosphate + H(+) = N(tele)-phospho-L-histidyl/L-threonyl-[pyruvate, phosphate dikinase] + diphosphate. Functionally, bifunctional serine/threonine kinase and phosphorylase involved in the regulation of the pyruvate, phosphate dikinase (PPDK) by catalyzing its phosphorylation/dephosphorylation. This chain is Putative pyruvate, phosphate dikinase regulatory protein, found in Rickettsia conorii (strain ATCC VR-613 / Malish 7).